The sequence spans 602 residues: T-box transcription factor TBX15 (602 aa).

Positions 43-95 (SMEALSPAGPLGDTDDPATHGLEPHPDSEQSTGSDSEVLTERTSCSFSTHTDL) are disordered. The span at 71–94 (EQSTGSDSEVLTERTSCSFSTHTD) shows a compositional bias: polar residues. A DNA-binding region (T-box) is located at residues 122–304 (LWKRFHDIGT…RNPFAKGFRD (183 aa)). The residue at position 330 (Thr330) is a Phosphothreonine. 2 disordered regions span residues 338–369 (QKQQ…LSPS) and 425–444 (QSGT…QRTP). Low complexity predominate over residues 346–369 (GTSPTTSSTGTPSPSASSHLLSPS).

Can form a heterodimer with TBX18.

The protein localises to the nucleus. Its function is as follows. Probable transcriptional regulator involved in the development of the skeleton of the limb, vertebral column and head. Acts by controlling the number of mesenchymal precursor cells and chondrocytes. In Mus musculus (Mouse), this protein is T-box transcription factor TBX15 (Tbx15).